Reading from the N-terminus, the 370-residue chain is ATP synthase gamma chain, chloroplastic (370 aa).

The transit peptide at M1–M55 directs the protein to the chloroplast. The active site involves C145.

Belongs to the ATPase gamma chain family. As to quaternary structure, F-type ATPases have 2 components, CF(1) - the catalytic core - and CF(0) - the membrane proton channel. CF(1) has five subunits: alpha(3), beta(3), gamma(1), delta(1), epsilon(1). CF(0) has four main subunits: a, b, b' and c.

It localises to the plastid. Its subcellular location is the chloroplast thylakoid membrane. Produces ATP from ADP in the presence of a proton gradient across the membrane. The gamma chain is believed to be important in regulating ATPase activity and the flow of protons through the CF(0) complex. The polypeptide is ATP synthase gamma chain, chloroplastic (ATPC) (Trieres chinensis (Marine centric diatom)).